A 109-amino-acid chain; its full sequence is Mannose-specific lectin (109 aa).

The Bulb-type lectin domain maps to 1–109 (DNILYSSEVL…PPIWATGTGR (109 aa)). A disulfide bond links Cys29 and Cys52. Residues 79–82 (TGTN) constitute a propeptide that is removed on maturation.

In terms of assembly, homotrimer or homotetramer.

It localises to the secreted. Functionally, mannose-specific lectin. Shows agglutinating activity toward rabbit erythrocytes and mitogenic activity towards mouse lymphocytes. The chain is Mannose-specific lectin from Aloe arborescens (Kidachi aloe).